Consider the following 457-residue polypeptide: Acetylcholine receptor subunit alpha-1-B (457 aa).

A signal peptide spans 1-20 (MDYTASCLIFLFIAAGTVFG). The Extracellular segment spans residues 21–230 (TDHETRLIGD…ITYHFVLQRL (210 aa)). Intrachain disulfides connect cysteine 148/cysteine 162 and cysteine 212/cysteine 213. A glycan (N-linked (GlcNAc...) asparagine) is linked at asparagine 161. The next 3 membrane-spanning stretches (helical) occupy residues 231 to 255 (PLYF…VFYL), 263 to 281 (MTLS…LVIV), and 297 to 316 (YMLF…VIVI). Residues 317 to 428 (NTHHRSPSTH…WKFVAMVLDH (112 aa)) are Cytoplasmic-facing. A helical membrane pass occupies residues 429-447 (ILLAVFMTVCVIGTLAVFA).

This sequence belongs to the ligand-gated ion channel (TC 1.A.9) family. Acetylcholine receptor (TC 1.A.9.1) subfamily. Alpha-1/CHRNA1 sub-subfamily. One of the alpha chains that assemble within the acetylcholine receptor, a pentamer of two alpha chains, a beta, a delta, and a gamma or epsilon chains.

Its subcellular location is the postsynaptic cell membrane. The protein resides in the cell membrane. It carries out the reaction K(+)(in) = K(+)(out). The catalysed reaction is Na(+)(in) = Na(+)(out). Upon acetylcholine binding, the AChR responds by an extensive change in conformation that affects all subunits and leads to opening of an ion-conducting channel across the plasma membrane. The sequence is that of Acetylcholine receptor subunit alpha-1-B (chrna1-b) from Xenopus laevis (African clawed frog).